Consider the following 302-residue polypeptide: Nitrophorin Cim l NP (302 aa).

The signal sequence occupies residues 1–20; that stretch reads MKLLLSAGAALAFVLGLCAA. C80 is a heme binding site.

Heme b is required as a cofactor. In terms of processing, the N-terminus is blocked. As to expression, expressed in salivary glands.

It localises to the secreted. Its function is as follows. Heme-based protein that delivers nitric oxide gas (NO) to the victim while feeding, resulting in vasodilation. In place of heme, the heme-binding cysteine can also reversibly bind NO when it is present in high concentrations. The sequence is that of Nitrophorin Cim l NP from Cimex lectularius (Bed bug).